The primary structure comprises 299 residues: MMATLTTAISPQGPYVGRFAPSPSGALHFGSLVAALGSYLRARSLGGKWLIRIEDIDPPREVKGAADDILRTLEAYGFEWDDTVLYQSARTDAYQAKLDQLLAQDDAYFCQCSRKQIQAMGGIYDGRCHQLATPHQSGAIRLVNRAQVAEFTDNLMGKVVVDHDFATEDFIIKRSDGLYAYQLAVVLDDAHQGISEVVRGCDLIEASCRQLSLYQSLGLTAPQWLHLPLACLTPGFKLSKQNHAQAIDKQHPQASLNAALTFLGQSTVEPTSAAQMLAQAVAQFELTAVPKQREIILTA.

L-glutamate contacts are provided by residues 18-22 and glutamate 54; that span reads RFAPS. Residues 21–31 carry the 'HIGH' region motif; it reads PSPSGALHFGS. Positions 110, 112, 124, and 128 each coordinate Zn(2+). L-glutamate contacts are provided by tyrosine 181 and arginine 199. The short motif at 237-241 is the 'KMSKS' region element; sequence KLSKQ. Lysine 240 serves as a coordination point for ATP.

This sequence belongs to the class-I aminoacyl-tRNA synthetase family. GluQ subfamily. Zn(2+) is required as a cofactor.

Its function is as follows. Catalyzes the tRNA-independent activation of glutamate in presence of ATP and the subsequent transfer of glutamate onto a tRNA(Asp). Glutamate is transferred on the 2-amino-5-(4,5-dihydroxy-2-cyclopenten-1-yl) moiety of the queuosine in the wobble position of the QUC anticodon. This is Glutamyl-Q tRNA(Asp) synthetase from Shewanella oneidensis (strain ATCC 700550 / JCM 31522 / CIP 106686 / LMG 19005 / NCIMB 14063 / MR-1).